Consider the following 1119-residue polypeptide: Multiple epidermal growth factor-like domains protein 10 (1119 aa).

The N-terminal stretch at Met1–Ser22 is a signal peptide. Residues Leu23 to Gly851 are Extracellular-facing. The region spanning Asp27–Pro104 is the EMI domain. 15 disulfide bridges follow: Cys31/Cys92, Cys57/Cys66, Cys91/Cys102, Cys102/Cys115, Cys106/Cys121, Cys123/Cys132, Cys145/Cys157, Cys151/Cys164, Cys166/Cys175, Cys188/Cys200, Cys194/Cys207, Cys209/Cys218, Cys231/Cys243, Cys237/Cys250, and Cys252/Cys260. 4 consecutive EGF-like domains span residues Ser98–Ser133, Trp141–Glu176, Tyr184–Glu219, and His227–Gly261. A glycan (N-linked (GlcNAc...) asparagine) is linked at Asn197. A glycan (N-linked (GlcNAc...) asparagine) is linked at Asn272. 2 consecutive EGF-like domains span residues Ser274–Gln304 and Tyr312–Glu347. Cystine bridges form between Cys277–Cys285, Cys279–Cys292, Cys294–Cys303, Cys316–Cys328, Cys322–Cys335, and Cys337–Cys346. N-linked (GlcNAc...) asparagine glycans are attached at residues Asn369 and Asn393. 9 consecutive EGF-like domains span residues Tyr401–Ala436, Tyr444–Ser479, Trp487–Asp522, Trp573–Gln608, Phe616–Asn653, Gly666–Ser696, Ile709–Thr739, Tyr747–Glu782, and Arg795–Asp825. Cystine bridges form between Cys405–Cys417, Cys411–Cys424, and Cys426–Cys435. The N-linked (GlcNAc...) asparagine glycan is linked to Asn447. Cystine bridges form between Cys448–Cys460, Cys454–Cys467, Cys469–Cys478, Cys491–Cys503, Cys497–Cys510, and Cys512–Cys521. Asn492 carries an N-linked (GlcNAc...) asparagine glycan. Asn576 is a glycosylation site (N-linked (GlcNAc...) asparagine). Cystine bridges form between Cys577/Cys589, Cys583/Cys596, Cys598/Cys607, Cys620/Cys634, Cys624/Cys641, Cys643/Cys652, Cys669/Cys677, Cys671/Cys684, Cys686/Cys695, Cys712/Cys720, Cys714/Cys727, Cys729/Cys738, Cys751/Cys763, Cys757/Cys770, Cys772/Cys781, Cys798/Cys806, Cys800/Cys813, and Cys815/Cys824. N-linked (GlcNAc...) asparagine glycosylation occurs at Asn674. A glycan (N-linked (GlcNAc...) asparagine) is linked at Asn803. A helical membrane pass occupies residues Ala852 to Ile872. The Cytoplasmic portion of the chain corresponds to Tyr873–Lys1119.

The protein belongs to the MEGF family.

The protein resides in the cell membrane. Membrane receptor involved in phagocytosis by macrophages and astrocytes of apoptotic cells. Essential factor in the regulation of muscle development including myogenesis. Likely plays a key role in muscle cell proliferation, adhesion and motility. May control the balance between skeletal muscle satellite cells proliferation and differentiation through regulation of the notch signaling pathway. This chain is Multiple epidermal growth factor-like domains protein 10, found in Danio rerio (Zebrafish).